Here is a 311-residue protein sequence, read N- to C-terminus: p-hydroxybenzoic acid efflux pump subunit AaeA (311 aa).

Residues 11–31 traverse the membrane as a helical segment; it reads VGITVLVVVLAVIAIFNVWAF.

It belongs to the membrane fusion protein (MFP) (TC 8.A.1) family.

Its subcellular location is the cell inner membrane. In terms of biological role, forms an efflux pump with AaeB. In Yersinia pestis bv. Antiqua (strain Antiqua), this protein is p-hydroxybenzoic acid efflux pump subunit AaeA.